The following is a 603-amino-acid chain: F-box only protein 46 (603 aa).

Positions 20–63 (YSQNQPRPPSAALKPSACPEPGGGAEPDHGPAHSENTPPALATE) are disordered. Phosphoserine; by ATM is present on residues S21 and S67. Disordered stretches follow at residues 111–163 (GGSR…PASA), 235–301 (EAQR…ARAK), 326–360 (LLAR…RDCG), and 396–440 (TVSP…AEGT). The span at 152-163 (GPPAAEEGPASA) shows a compositional bias: low complexity. S338 carries the phosphoserine modification. T347 carries the phosphothreonine modification. Pro residues-rich tracts occupy residues 347–356 (TPPAPPPPPA) and 417–426 (DGPPEPPPAD). The region spanning 470 to 522 (RQYMLLLPEHVLVKIFSFLPTRALAALKCTCHHFKGIIEAFGVRATDSRWSRD) is the F-box domain.

In terms of assembly, part of a SCF (SKP1-cullin-F-box) protein ligase complex SCF(FBXO46) composed of CUL1, SKP1, RBX1 and FBXO46. Post-translationally, phosphorylated by ATM in response to DNA damage, promoting ubiquitination and degradation by the SCF(FBXO31) complex. In terms of processing, ATM-phosphorylated FBXO46 is ubiquitinated and degradaded by the SCF(FBXO31) complex in response to DNA damage.

The protein operates within protein modification; protein ubiquitination. Its function is as follows. Substrate-recognition component of the SCF(FBXO46) protein ligase complex, which mediates the ubiquitination and degradation of target proteins. In absence of stress, the SCF(FBXO46) complex catalyzes ubiquitination and degradation of MTOR-phosphorylated FBXO31. The chain is F-box only protein 46 from Homo sapiens (Human).